Here is a 358-residue protein sequence, read N- to C-terminus: tRNA-specific 2-thiouridylase MnmA (358 aa).

Residues alanine 8–serine 15 and methionine 35 contribute to the ATP site. The tract at residues asparagine 95–aspartate 97 is interaction with target base in tRNA. Cysteine 100 functions as the Nucleophile in the catalytic mechanism. Cysteine 100 and cysteine 194 are oxidised to a cystine. ATP is bound at residue glycine 124. Positions lysine 144–glutamine 146 are interaction with tRNA. Cysteine 194 functions as the Cysteine persulfide intermediate in the catalytic mechanism. The segment at arginine 301–tyrosine 302 is interaction with tRNA.

It belongs to the MnmA/TRMU family.

The protein resides in the cytoplasm. It catalyses the reaction S-sulfanyl-L-cysteinyl-[protein] + uridine(34) in tRNA + AH2 + ATP = 2-thiouridine(34) in tRNA + L-cysteinyl-[protein] + A + AMP + diphosphate + H(+). Its function is as follows. Catalyzes the 2-thiolation of uridine at the wobble position (U34) of tRNA, leading to the formation of s(2)U34. This Chlamydia trachomatis serovar L2 (strain ATCC VR-902B / DSM 19102 / 434/Bu) protein is tRNA-specific 2-thiouridylase MnmA.